Consider the following 242-residue polypeptide: Endoglucanase-5 (242 aa).

Positions 1 to 17 (MKATLVLGSLIVGAVSA) are cleaved as a signal peptide. The tract at residues 18–182 (YKATTTRYYD…ETDPTPVLGN (165 aa)) is catalytic. Catalysis depends on Asp-27, which acts as the Nucleophile. Asp-134 serves as the catalytic Proton donor. The interval 177 to 206 (TPVLGNDTGSTPPGSSPPATSSSPPSGGGQ) is disordered. A glycan (N-linked (GlcNAc...) asparagine) is linked at Asn-182. A compositionally biased stretch (low complexity) spans 184-201 (TGSTPPGSSPPATSSSPP). Residues 205–241 (GQQTLYGQCGGAGWTGPTTCQAPGTCKVQNQWYSQCL) form the CBM1 domain. Disulfide bonds link Cys-213–Cys-230 and Cys-224–Cys-240.

It belongs to the glycosyl hydrolase 45 (cellulase K) family.

It catalyses the reaction Endohydrolysis of (1-&gt;4)-beta-D-glucosidic linkages in cellulose, lichenin and cereal beta-D-glucans.. The protein is Endoglucanase-5 (egl5) of Hypocrea jecorina (Trichoderma reesei).